The following is a 39-amino-acid chain: Potassium channel toxin alpha-KTx 2.24 (39 aa).

3 disulfide bridges follow: C7–C29, C13–C34, and C17–C36.

Belongs to the short scorpion toxin superfamily. Potassium channel inhibitor family. Alpha-KTx 02 subfamily. Expressed by the venom gland.

It localises to the secreted. Blocks human voltage-gated potassium (Kv) channels Kv1.1/KCNA, Kv1.2/KCNA2 and Kv1.3/KCNA3. Exhibits high affinity for Kv1.2/KCNA2 and selectivity over Kv1.1/KCNA and Kv1.3/KCNA3. This chain is Potassium channel toxin alpha-KTx 2.24, found in Centruroides bonito (Scorpion).